The sequence spans 250 residues: Sulfate transporter CysZ (250 aa).

Helical transmembrane passes span 26–46, 71–91, 150–170, and 211–231; these read LFVL…IYLA, ILWP…FTML, LFIL…WLLF, and IVYL…AAVA.

Belongs to the CysZ family.

It localises to the cell inner membrane. Functionally, high affinity, high specificity proton-dependent sulfate transporter, which mediates sulfate uptake. Provides the sulfur source for the cysteine synthesis pathway. In Pseudomonas fluorescens (strain Pf0-1), this protein is Sulfate transporter CysZ.